A 59-amino-acid chain; its full sequence is Conotoxin mr5a (59 aa).

A signal peptide spans 1 to 22 (MRCLPVFVILLLLIASAPSVDA). Residues 23–48 (RPKTKDDMPLASFHDNAKRILQILQD) constitute a propeptide that is removed on maturation.

In terms of processing, contains 2 disulfide bonds that can be either 'C1-C3, C2-C4' or 'C1-C4, C2-C3', since these disulfide connectivities have been observed for conotoxins with cysteine framework V (for examples, see AC P0DQQ7 and AC P81755). Expressed by the venom duct.

The protein resides in the secreted. The sequence is that of Conotoxin mr5a from Conus marmoreus (Marble cone).